Consider the following 224-residue polypeptide: Octanoyltransferase (224 aa).

One can recognise a BPL/LPL catalytic domain in the interval 45-223 (PSNKQAVWML…SLNKRFGLLW (179 aa)). Residues 87-94 (RGGDVTHH), 154-156 (SIG), and 167-169 (GIA) each bind substrate. The Acyl-thioester intermediate role is filled by Cys-185.

Belongs to the LipB family.

Its subcellular location is the cytoplasm. It carries out the reaction octanoyl-[ACP] + L-lysyl-[protein] = N(6)-octanoyl-L-lysyl-[protein] + holo-[ACP] + H(+). The protein operates within protein modification; protein lipoylation via endogenous pathway; protein N(6)-(lipoyl)lysine from octanoyl-[acyl-carrier-protein]: step 1/2. In terms of biological role, catalyzes the transfer of endogenously produced octanoic acid from octanoyl-acyl-carrier-protein onto the lipoyl domains of lipoate-dependent enzymes. Lipoyl-ACP can also act as a substrate although octanoyl-ACP is likely to be the physiological substrate. In Prochlorococcus marinus (strain SARG / CCMP1375 / SS120), this protein is Octanoyltransferase.